The chain runs to 278 residues: Phosphonates import ATP-binding protein PhnC (278 aa).

The ABC transporter domain maps to 25 to 273 (LAVKGLVKAY…IIQDIYSDES (249 aa)). Residue 58 to 65 (GRSGAGKS) coordinates ATP.

Belongs to the ABC transporter superfamily. Phosphonates importer (TC 3.A.1.9.1) family. The complex is composed of two ATP-binding proteins (PhnC), two transmembrane proteins (PhnE) and a solute-binding protein (PhnD).

Its subcellular location is the cell inner membrane. The catalysed reaction is phosphonate(out) + ATP + H2O = phosphonate(in) + ADP + phosphate + H(+). Part of the ABC transporter complex PhnCDE involved in phosphonates import. Responsible for energy coupling to the transport system. In Yersinia pestis bv. Antiqua (strain Antiqua), this protein is Phosphonates import ATP-binding protein PhnC.